The following is a 639-amino-acid chain: Protein P1 (639 aa).

The N-terminal stretch at 1 to 20 (MNRFTAYAALFFIFSLCSTA) is a signal peptide. Transmembrane regions (helical) follow at residues 121–141 (AASV…WTLA), 144–164 (ITLF…LGCI), and 172–192 (ALSL…KIIW). Positions 207-399 (VEGYKGFSVP…GITSPNYVFE (193 aa)) constitute a Peptidase S39 domain. Residues His-255, Asp-286, and Ser-354 each act as for protease activity in the active site. Disordered regions lie at residues 456–510 (TNAP…AAIS) and 542–639 (VSQK…NSKA). Over residues 463 to 487 (TAQTNSAEKTAPSTSAEKTAPTNKP) the composition is skewed to polar residues. Over residues 551-561 (KQNKRGRRGGK) the composition is skewed to basic residues. Residues 562-576 (NKQNNLPPTSTQSIS) show a composition bias toward polar residues.

This sequence belongs to the peptidase S39B family. Post-translationally, specific enzymatic cleavages in vivo yield mature proteins. The protease probably cleaves itself and releases the VPg protein. The VPg protein is probably further cleaved in its C-terminus.

It is found in the membrane. Its function is as follows. Precursor from which the VPg molecule is probably released at the onset of the RNA synthesis. Essential for virus replication. The chain is Protein P1 from Solanum tuberosum (Potato).